We begin with the raw amino-acid sequence, 328 residues long: Solute-binding protein Bamb_6123 (328 aa).

The first 26 residues, 1 to 26 (MTHRFPRSRTALAVALMAGFAMSAQA), serve as a signal peptide directing secretion. Beta-D-galacturonate-binding residues include histidine 35, glutamate 73, arginine 89, arginine 149, asparagine 209, and glutamate 236. Positions 35, 73, 89, 149, 209, and 236 each coordinate beta-D-glucuronate.

It belongs to the bacterial solute-binding protein 7 family. As to quaternary structure, the complex is comprised of an extracytoplasmic solute-binding protein and a heteromeric permease formed by two transmembrane proteins.

The protein resides in the periplasm. In terms of biological role, solute-binding protein that binds D-galacturonate and D-glucuronate (in vitro). Probably part of a tripartite ATP-independent periplasmic (TRAP) transport system that mediates solute transport into the cytoplasm. This is Solute-binding protein Bamb_6123 from Burkholderia ambifaria (strain ATCC BAA-244 / DSM 16087 / CCUG 44356 / LMG 19182 / AMMD) (Burkholderia cepacia (strain AMMD)).